We begin with the raw amino-acid sequence, 158 residues long: Transcription elongation factor GreA (158 aa).

A coiled-coil region spans residues 14 to 76 (VKKLEEELEY…QIENMLKNAN (63 aa)).

It belongs to the GreA/GreB family.

Its function is as follows. Necessary for efficient RNA polymerase transcription elongation past template-encoded arresting sites. The arresting sites in DNA have the property of trapping a certain fraction of elongating RNA polymerases that pass through, resulting in locked ternary complexes. Cleavage of the nascent transcript by cleavage factors such as GreA or GreB allows the resumption of elongation from the new 3'terminus. GreA releases sequences of 2 to 3 nucleotides. The polypeptide is Transcription elongation factor GreA (Clostridium acetobutylicum (strain ATCC 824 / DSM 792 / JCM 1419 / IAM 19013 / LMG 5710 / NBRC 13948 / NRRL B-527 / VKM B-1787 / 2291 / W)).